The chain runs to 488 residues: RNA binding exosome specificity factor Mmi1 (488 aa).

Polar residues-rich tracts occupy residues 1–14, 33–47, and 54–66; these read MSNT…SSKS, LNES…TTHT, and SVLS…NFSS. 2 disordered regions span residues 1 to 20 and 25 to 80; these read MSNT…ELPN and RSLW…DAPI. Positions 71-80 are enriched in basic and acidic residues; that stretch reads PAPESHDAPI. The tract at residues 95 to 122 is interaction with erh1; that stretch reads GKYDFSRHCTDYGHSYEWPYFRSLRRES. Disordered stretches follow at residues 163 to 185 and 225 to 261; these read SRLH…RRLA and SYPV…TRAS. Position 176 is a phosphothreonine (Thr-176). A phosphoserine mark is found at Ser-178, Ser-230, Ser-231, Ser-261, Ser-263, and Ser-265. The segment covering 289–299 has biased composition (low complexity); the sequence is SYLLSNSSNDS. The interval 289 to 328 is disordered; sequence SYLLSNSSNDSASRKEKPKARASTPPPLNFSRASEHRNEK. Ser-311 is subject to Phosphoserine. Thr-312 is subject to Phosphothreonine. One can recognise a YTH domain in the interval 350 to 476; it reads SRYFIMLCDN…DEGSRLCTLI (127 aa).

In terms of assembly, component of the erh1-mmi1 complex composed of mmi1 and erh1. Interacts (via N-terminus) with erh1 in a 2:2 stoichiometry. Interacts with rrp6.

It localises to the nucleus. Functionally, RNA-binding protein that recognizes and binds N6-methyladenosine (m6A)-containing RNAs, a modification present at internal sites of mRNAs and some non-coding RNAs. Functions alone and as part of the erh1-mmi1 complex, to recruit the CCR4-NOT complex and the NURS complex to target RNAs. Suppresses the meiotic program during vegetative growth and promotes the meiotic program during mating. Binds to DSR (determinant of selective removal) regions in meiotic mRNA, and recruits the NURS complex to targets. Recruitment of NURS complex to target mRNAs promotes mRNA decay by engagement of the nuclear exosome, and formation of heterochromatin islands at meiotic genes silenced by the exosome. Recruitment of the CCR4-NOT complex to target RNAs promotes heterochromatin formation at RNAi-dependent heterochromatin domains (HOODs), including a subset of meiotic genes, lncRNAs and retrotransposons. Recruitment of the CCR4-NOT complex to rDNA promotes rDNA heterochromatin assembly. Promotes non-canonical transcription termination at meiotic genes and prevents lncRNA transcription from invading and repressing adjacent genes. This Schizosaccharomyces pombe (strain 972 / ATCC 24843) (Fission yeast) protein is RNA binding exosome specificity factor Mmi1 (mmi1).